We begin with the raw amino-acid sequence, 1462 residues long: DNA polymerase alpha catalytic subunit (1462 aa).

Disordered regions lie at residues 1–33 (MAPVHGDDSLSDSGSFVSSRARREKKSKKGRQE) and 98–123 (DLEDDALDADEKGKDGKARNKDKRNV). The segment covering 20-29 (RARREKKSKK) has biased composition (basic residues). The span at 106-116 (ADEKGKDGKAR) shows a compositional bias: basic and acidic residues. T174 is modified (phosphothreonine). Phosphoserine is present on residues S186, S190, and S209. Residue K224 is modified to N6-acetyllysine. The tract at residues 232 to 251 (DVQVESTEEEQESGAMEFED) is disordered. A Phosphothreonine modification is found at T406. Residues 650-715 (RINVCKAPHW…YHLSELVQQI (66 aa)) are DNA-binding. K970 carries the N6-succinyllysine modification. Residues 1245–1376 (QFRVHHYHKD…TGPLCPACMK (132 aa)) are DNA-binding. Residues C1283, C1286, C1310, C1315, C1348, C1353, C1371, and C1374 each contribute to the Zn(2+) site. The CysA-type zinc finger occupies 1283 to 1318 (CPTCGTENIYDNVFDGSGTDMEPSLYRCSNIDCKAS). The short motif at 1348 to 1374 (CEEPTCRNRTRHLPLQFSRTGPLCPAC) is the CysB motif element.

It belongs to the DNA polymerase type-B family. Component of the alpha DNA polymerase complex (also known as the alpha DNA polymerase-primase complex) consisting of four subunits: the catalytic subunit POLA1, the regulatory subunit POLA2, and the primase complex subunits PRIM1 and PRIM2 respectively. Interacts with PARP1; this interaction functions as part of the control of replication fork progression. Interacts with MCM10 and WDHD1; these interactions recruit the polymerase alpha complex to the pre-replicative complex bound to DNA. Interacts with RPA1; this interaction stabilizes the replicative complex and reduces the misincorporation rate of DNA polymerase alpha by acting as a fidelity clamp. As to quaternary structure, (Microbial infection) Interacts with SV40 Large T antigen; this interaction allows viral DNA replication. In terms of assembly, (Microbial infection) Interacts with herpes simplex virus 1/HHV-1 replication origin-binding protein UL9. Post-translationally, a 165 kDa form is probably produced by proteolytic cleavage at Lys-124.

The protein resides in the nucleus. The protein localises to the cytoplasm. It localises to the cytosol. It carries out the reaction DNA(n) + a 2'-deoxyribonucleoside 5'-triphosphate = DNA(n+1) + diphosphate. Its activity is regulated as follows. Autoinhibited in apo-primosome, where the zinc motif of POLA1 and oligonucleotide/olicosaccharide-binding domain of POLA2 are placed into the active site blocking RNA:DNA duplex entry. Its function is as follows. Catalytic subunit of the DNA polymerase alpha complex (also known as the alpha DNA polymerase-primase complex) which plays an essential role in the initiation of DNA synthesis. During the S phase of the cell cycle, the DNA polymerase alpha complex (composed of a catalytic subunit POLA1, a regulatory subunit POLA2 and two primase subunits PRIM1 and PRIM2) is recruited to DNA at the replicative forks via direct interactions with MCM10 and WDHD1. The primase subunit of the polymerase alpha complex initiates DNA synthesis by oligomerising short RNA primers on both leading and lagging strands. These primers are initially extended by the polymerase alpha catalytic subunit and subsequently transferred to polymerase delta and polymerase epsilon for processive synthesis on the lagging and leading strand, respectively. The reason this transfer occurs is because the polymerase alpha has limited processivity and lacks intrinsic 3' exonuclease activity for proofreading error, and therefore is not well suited for replicating long complexes. In the cytosol, responsible for a substantial proportion of the physiological concentration of cytosolic RNA:DNA hybrids, which are necessary to prevent spontaneous activation of type I interferon responses. The polypeptide is DNA polymerase alpha catalytic subunit (POLA1) (Homo sapiens (Human)).